Here is a 274-residue protein sequence, read N- to C-terminus: uncharacterized protein (274 aa).

The protein belongs to the type II cytokine receptor family.

This is an uncharacterized protein from Sus scrofa (Pig).